Consider the following 209-residue polypeptide: Large ribosomal subunit protein bL25 (209 aa).

Residues 190–209 form a disordered region; sequence GLKSADDEAEGEDAEEAAAE. The span at 196–209 shows a compositional bias: acidic residues; the sequence is DEAEGEDAEEAAAE.

The protein belongs to the bacterial ribosomal protein bL25 family. CTC subfamily. As to quaternary structure, part of the 50S ribosomal subunit; part of the 5S rRNA/L5/L18/L25 subcomplex. Contacts the 5S rRNA. Binds to the 5S rRNA independently of L5 and L18.

Its function is as follows. This is one of the proteins that binds to the 5S RNA in the ribosome where it forms part of the central protuberance. This chain is Large ribosomal subunit protein bL25, found in Ruegeria sp. (strain TM1040) (Silicibacter sp.).